Consider the following 89-residue polypeptide: Small ribosomal subunit protein uS15 (89 aa).

It belongs to the universal ribosomal protein uS15 family. As to quaternary structure, part of the 30S ribosomal subunit. Forms a bridge to the 50S subunit in the 70S ribosome, contacting the 23S rRNA.

One of the primary rRNA binding proteins, it binds directly to 16S rRNA where it helps nucleate assembly of the platform of the 30S subunit by binding and bridging several RNA helices of the 16S rRNA. Its function is as follows. Forms an intersubunit bridge (bridge B4) with the 23S rRNA of the 50S subunit in the ribosome. In Latilactobacillus sakei subsp. sakei (strain 23K) (Lactobacillus sakei subsp. sakei), this protein is Small ribosomal subunit protein uS15.